The sequence spans 67 residues: Large ribosomal subunit protein uL29 (67 aa).

The protein belongs to the universal ribosomal protein uL29 family.

The protein is Large ribosomal subunit protein uL29 of Wolbachia sp. subsp. Drosophila simulans (strain wRi).